We begin with the raw amino-acid sequence, 568 residues long: Glucose-6-phosphate isomerase, cytosolic 1 (568 aa).

Glu360 functions as the Proton donor in the catalytic mechanism. Catalysis depends on residues His391 and Lys516.

The protein belongs to the GPI family. In terms of assembly, homodimer.

It localises to the cytoplasm. It catalyses the reaction alpha-D-glucose 6-phosphate = beta-D-fructose 6-phosphate. The protein operates within carbohydrate degradation; glycolysis; D-glyceraldehyde 3-phosphate and glycerone phosphate from D-glucose: step 2/4. The sequence is that of Glucose-6-phosphate isomerase, cytosolic 1 (PGIC1) from Clarkia arcuata (Glandular clarkia).